The following is a 38-amino-acid chain: Exendin-1 (38 aa).

The O-linked (HexNAc...) serine; in Exendin-1 and Exendin-1b glycan is linked to Ser-32.

The protein belongs to the glucagon family. O-linked glycan consists of Hex-HexNAc saccharide. Post-translationally, glycosylation may be of interest for the biological stability of exendin-1 and exendin-1b. Expressed by the venom gland.

It localises to the secreted. Its function is as follows. O-linked and free exendin-1 and exendin-1b have vasoactive intestinal peptide(VIP)/secretin-like biological activities. They interact with rat and human VIP receptors 1 (VIPR1) and 2 (VIPR2), with the highest affinity for the human VIPR2. They induce hypotension that is mediated by relaxation of cardiac smooth muscle. This Heloderma horridum horridum (Mexican beaded lizard) protein is Exendin-1.